A 210-amino-acid polypeptide reads, in one-letter code: Glutathione S-transferase P (210 aa).

The GST N-terminal domain maps to 2-81; the sequence is PPYTIVYFPV…HLGRSLGLYG (80 aa). At tyrosine 4 the chain carries Phosphotyrosine; by EGFR. Residues tyrosine 8, arginine 14, tryptophan 39, lysine 45, and 52-53 each bind glutathione; that span reads QL. Threonine 62 carries the post-translational modification Phosphothreonine. Position 65–66 (65–66) interacts with glutathione; that stretch reads QS. The 122-residue stretch at 83–204 folds into the GST C-terminal domain; it reads DQKEAALVDM…SSPDHLNRPI (122 aa). Residues lysine 103 and lysine 116 each carry the N6-succinyllysine modification. Residue lysine 128 is modified to N6-acetyllysine.

The protein belongs to the GST superfamily. Pi family. In terms of assembly, homodimer. Interacts with CDK5. As to expression, present in kidney, lung, testis and placenta, very low levels in liver.

The protein resides in the cytoplasm. The protein localises to the mitochondrion. Its subcellular location is the nucleus. The enzyme catalyses RX + glutathione = an S-substituted glutathione + a halide anion + H(+). It carries out the reaction prostaglandin J2 + glutathione = prostaglandin J2-S-(R)-glutathione. It catalyses the reaction prostaglandin J2 + glutathione = prostaglandin J2-S-(S)-glutathione. The catalysed reaction is prostaglandin A2 + glutathione = prostaglandin A2-S-(S)-glutathione. The enzyme catalyses 11(S)-hydroxy-14(S),15(S)-epoxy-(5Z,8Z,12E)-eicosatrienoate + glutathione = (11S,15S)-dihydroxy-14(R)-S-glutathionyl-(5Z,8Z,12E)-eicosatrienoate. In terms of biological role, conjugation of reduced glutathione to a wide number of exogenous and endogenous hydrophobic electrophiles. Involved in the formation of glutathione conjugates of both prostaglandin A2 (PGA2) and prostaglandin J2 (PGJ2). Participates in the formation of novel hepoxilin regioisomers. Negatively regulates CDK5 activity via p25/p35 translocation to prevent neurodegeneration. The polypeptide is Glutathione S-transferase P (Rattus norvegicus (Rat)).